Here is a 164-residue protein sequence, read N- to C-terminus: Large ribosomal subunit protein uL15 (164 aa).

Residues Met1–Lys14 show a composition bias toward polar residues. Residues Met1–Val35 form a disordered region. Gly residues predominate over residues Arg21–Val35.

The protein belongs to the universal ribosomal protein uL15 family. Part of the 50S ribosomal subunit.

Its function is as follows. Binds to the 23S rRNA. This chain is Large ribosomal subunit protein uL15, found in Methylocella silvestris (strain DSM 15510 / CIP 108128 / LMG 27833 / NCIMB 13906 / BL2).